An 85-amino-acid polypeptide reads, in one-letter code: U4-theraphotoxin-Hhn1m (85 aa).

An N-terminal signal peptide occupies residues 1–22 (MKVTLIAILTCAAVLVLHTTAA). Positions 23–48 (EELEAESQLVEVGMPDTELAAVDEER) are excised as a propeptide. Intrachain disulfides connect Cys-52-Cys-66, Cys-56-Cys-77, and Cys-71-Cys-82.

It belongs to the neurotoxin 12 (Hwtx-2) family. 02 (Hwtx-2) subfamily. In terms of tissue distribution, expressed by the venom gland.

Its subcellular location is the secreted. Functionally, postsynaptic neurotoxin. The polypeptide is U4-theraphotoxin-Hhn1m (Cyriopagopus hainanus (Chinese bird spider)).